Here is a 233-residue protein sequence, read N- to C-terminus: MGQKVNPIGLRLGINRNWESRWFPTKANMAENIGEDYKIRTFLKRKLYYAGISQILVERTAKKLRVTVVAARPGIIIGKKGSDVDVLRKELQNLIGKEVNINIKEERKAGASAQLAAESVATQLEKRIAFRRAMKKVIQGAQKAGAKGIKVSVSGRLGGAEMARTEWYLEGRVPLHTLRAKIDYGFAEAHTTYGNIGIKVWIFKGEVLQKGVQPEKTEESAPAKKPRRARRGK.

In terms of domain architecture, KH type-2 spans 39–107 (IRTFLKRKLY…EVNINIKEER (69 aa)). The tract at residues 211-233 (GVQPEKTEESAPAKKPRRARRGK) is disordered. A compositionally biased stretch (basic and acidic residues) spans 213 to 222 (QPEKTEESAP). A compositionally biased stretch (basic residues) spans 224-233 (KKPRRARRGK).

Belongs to the universal ribosomal protein uS3 family. As to quaternary structure, part of the 30S ribosomal subunit. Forms a tight complex with proteins S10 and S14.

Functionally, binds the lower part of the 30S subunit head. Binds mRNA in the 70S ribosome, positioning it for translation. The chain is Small ribosomal subunit protein uS3 from Campylobacter lari (strain RM2100 / D67 / ATCC BAA-1060).